The chain runs to 247 residues: Acetoacetate decarboxylase 1 (247 aa).

Lysine 116 acts as the Schiff-base intermediate with acetoacetate in catalysis.

The protein belongs to the ADC family.

It catalyses the reaction acetoacetate + H(+) = acetone + CO2. Catalyzes the conversion of acetoacetate to acetone and carbon dioxide. The sequence is that of Acetoacetate decarboxylase 1 from Mesorhizobium japonicum (strain LMG 29417 / CECT 9101 / MAFF 303099) (Mesorhizobium loti (strain MAFF 303099)).